Consider the following 654-residue polypeptide: MAVSVSKQYMTSLVVILLFISLSSLSPTSTSHSCDPVEEEEEASSFGYVCHSNLQKCHTFAILRAKPPFYSLSDLSRHLGLDADDEYVPKGQLLLIPIECRCNGSIYEASLIKNCVKGDTFRSVSQSLQGLTTCLSIREKNPHISEDKLGDNIKLRLAIRCSCPQEGVSNASFLVTYPVGVRDSVSSLAVRFNTTEDAIVSANNKSGVVPLKPALIPLDHKPEKQGSRKRNPSKKKRSKMKLMIAVSSAIAGVCGLVTLMVFGYLHWKKETQIQTQTQKWISNKDPETRQLSLSIRTTSDKKISFEGSQDGSILDSHNTVGTTTPRKPVLEIYAFEELEKATENFSSSNHIKGSVYFGSLKGKDLAIKQVNADEMKRFDFGLLNDQSHYYNHNVIRVLGTCFREIDQDSYLVFEYARNGSLWDWIQNKLAIKNQFIESCYCFLAWKQRIKICHDVAIALKYMHRINYVHGNIKSRNIFLNEDLRGKVGNFGMSKCVTNELATEENLIESSLSPASDIFAYGIIVMEVLSGQTPDMLLGLQEVETTSLGTQETFVSEWSRLRRLLGDKEKLREVMDSTLGESYSVDSAFEIASIARDCTAEEAESRPSAVEIAERVSRLVDDDEDEEDEAVIDRESTLISESSYKPLVKKSSIID.

Residues Met-1–Leu-25 form the signal peptide. At Ser-26–Lys-241 the chain is on the extracellular side. Disulfide bonds link Cys-50–Cys-102, Cys-57–Cys-163, and Cys-100–Cys-161. N-linked (GlcNAc...) asparagine glycans are attached at residues Asn-103, Asn-170, Asn-193, and Asn-204. The LysM; degenerate repeat unit spans residues Tyr-177–Pro-217. The tract at residues Leu-218–Ser-238 is disordered. Residues Ser-227–Ser-238 show a composition bias toward basic residues. The chain crosses the membrane as a helical span at residues Leu-242–Phe-262. The Cytoplasmic portion of the chain corresponds to Gly-263–Asp-654. The Protein kinase domain occupies Thr-324–Val-619. Residues Leu-330–Leu-338 and Lys-368 each bind ATP.

The protein belongs to the protein kinase superfamily. Ser/Thr protein kinase family.

Its subcellular location is the cell membrane. Functionally, may recognize microbe-derived N-acetylglucosamine (NAG)-containing ligands. The protein is Protein LYK2 (LYK2) of Arabidopsis thaliana (Mouse-ear cress).